The primary structure comprises 514 residues: CBL-interacting protein kinase 25 (514 aa).

The 261-residue stretch at 21–281 (YEFGPLVGEG…IPEIMEMRWF (261 aa)) folds into the Protein kinase domain. Residues 27–35 (VGEGNFAKV) and K50 each bind ATP. D149 functions as the Proton acceptor in the catalytic mechanism. The tract at residues 167 to 196 (DFGLSALADMERREAHLQTVCGTPLFLAPE) is activation loop. Residues 303–340 (GLDGEPELYDSDTDTIESSSSSESPTPVAGTPRGMHTS) form a disordered region. The span at 304 to 317 (LDGEPELYDSDTDT) shows a compositional bias: acidic residues. Over residues 318 to 329 (IESSSSSESPTP) the composition is skewed to low complexity. Residues 323–395 (SSESPTPVAG…PSFDLSGLFE (73 aa)) enclose the NAF domain. The PPI stretch occupies residues 398–427 (GERMRFVSGAPVADIIAKLQEIAGMVSFTA).

The protein belongs to the protein kinase superfamily. CAMK Ser/Thr protein kinase family. SNF1 subfamily. It depends on Mn(2+) as a cofactor.

It carries out the reaction L-seryl-[protein] + ATP = O-phospho-L-seryl-[protein] + ADP + H(+). It catalyses the reaction L-threonyl-[protein] + ATP = O-phospho-L-threonyl-[protein] + ADP + H(+). CIPK serine-threonine protein kinases interact with CBL proteins. Binding of a CBL protein to the regulatory NAF domain of CIPK protein lead to the activation of the kinase in a calcium-dependent manner. The protein is CBL-interacting protein kinase 25 (CIPK25) of Oryza sativa subsp. japonica (Rice).